Here is a 421-residue protein sequence, read N- to C-terminus: Divalent metal cation transporter MntH (421 aa).

11 consecutive transmembrane segments (helical) span residues 27 to 47 (LGPA…ATNI), 51 to 71 (SLFD…AIFL), 100 to 120 (WFLW…EFLG), 128 to 148 (LFHI…FAIV), 160 to 180 (GIIF…LFIA), 201 to 221 (AMLI…IYLH), 248 to 268 (ILVA…VSAA), 289 to 309 (PLLG…SGFS), 337 to 357 (LVTM…LKSL), 358 to 378 (IVSQ…LLLI), and 396 to 416 (IMGV…LYLT).

The protein belongs to the NRAMP family.

It localises to the cell membrane. H(+)-stimulated, divalent metal cation uptake system. This chain is Divalent metal cation transporter MntH, found in Caldanaerobacter subterraneus subsp. tengcongensis (strain DSM 15242 / JCM 11007 / NBRC 100824 / MB4) (Thermoanaerobacter tengcongensis).